The sequence spans 1071 residues: ATP-dependent helicase/deoxyribonuclease subunit B (1071 aa).

Belongs to the helicase family. AddB/RexB type 2 subfamily. As to quaternary structure, heterodimer of AddA and RexB. Mg(2+) serves as cofactor.

Its function is as follows. The heterodimer acts as both an ATP-dependent DNA helicase and an ATP-dependent, dual-direction single-stranded exonuclease. Recognizes the chi site generating a DNA molecule suitable for the initiation of homologous recombination. This subunit has 5' -&gt; 3' nuclease activity but not helicase activity. This is ATP-dependent helicase/deoxyribonuclease subunit B from Streptococcus pyogenes serotype M28 (strain MGAS6180).